We begin with the raw amino-acid sequence, 343 residues long: Sulfate/thiosulfate import ATP-binding protein CysA (343 aa).

The ABC transporter domain maps to 3–233 (ILIENISKTF…PATPFVMGFM (231 aa)). 35 to 42 (GPSGSGKS) contributes to the ATP binding site.

This sequence belongs to the ABC transporter superfamily. Sulfate/tungstate importer (TC 3.A.1.6) family.

The protein localises to the plastid. The protein resides in the chloroplast. It catalyses the reaction sulfate(out) + ATP + H2O = sulfate(in) + ADP + phosphate + H(+). The enzyme catalyses thiosulfate(out) + ATP + H2O = thiosulfate(in) + ADP + phosphate + H(+). In terms of biological role, part of the ABC transporter complex involved in sulfate/thiosulfate import. Responsible for energy coupling to the transport system. In Nephroselmis olivacea (Green alga), this protein is Sulfate/thiosulfate import ATP-binding protein CysA.